Consider the following 320-residue polypeptide: Malate dehydrogenase (320 aa).

NAD(+) contacts are provided by residues 10–15 and Asp-34; that span reads GAGNIG. Residues Arg-83 and Arg-89 each contribute to the substrate site. Residues Asn-96 and 119–121 contribute to the NAD(+) site; that span reads ITN. Substrate is bound by residues Asn-121 and Arg-152. His-176 functions as the Proton acceptor in the catalytic mechanism.

This sequence belongs to the LDH/MDH superfamily. MDH type 3 family.

The enzyme catalyses (S)-malate + NAD(+) = oxaloacetate + NADH + H(+). Its function is as follows. Catalyzes the reversible oxidation of malate to oxaloacetate. The chain is Malate dehydrogenase from Novosphingobium aromaticivorans (strain ATCC 700278 / DSM 12444 / CCUG 56034 / CIP 105152 / NBRC 16084 / F199).